The sequence spans 71 residues: Plasticin-DA1 (71 aa).

The N-terminal stretch at 1–22 (MAFLKKSLFLVLFLALVPLSIC) is a signal peptide. Residues 23–42 (EAEKREEENEEKQEDDDESE) constitute a propeptide that is removed on maturation. A disordered region spans residues 25–45 (EKREEENEEKQEDDDESEKKR). A compositionally biased stretch (acidic residues) spans 30-40 (ENEEKQEDDDE). Gly68 carries the post-translational modification Glycine amide. The propeptide occupies 70-71 (ER).

This sequence belongs to the frog skin active peptide (FSAP) family. Plasticin subfamily. Expressed by the skin glands.

The protein resides in the secreted. Its subcellular location is the target cell membrane. Neutral peptide with no antimicrobial activity. Does not permeate bacterial membranes. May act in synergy with cationic peptides by enhancing their activity. Has a moderate hemolytic activity. It interacts with zwitterionic phospholipids (DMPC) without perturbing either the interface or inside of the bilayer, whereas it causes little perturbations at the interface peptide-anionic vesicles (DMPG) as well as in the bilayer alkyl chains. This is Plasticin-DA1 from Agalychnis dacnicolor (Giant Mexican leaf frog).